Consider the following 516-residue polypeptide: Histidine ammonia-lyase (516 aa).

The 5-imidazolinone (Ala-Gly) cross-link spans 143-145; it reads ASG. A 2,3-didehydroalanine (Ser) modification is found at Ser-144.

This sequence belongs to the PAL/histidase family. In terms of processing, contains an active site 4-methylidene-imidazol-5-one (MIO), which is formed autocatalytically by cyclization and dehydration of residues Ala-Ser-Gly.

The protein localises to the cytoplasm. It carries out the reaction L-histidine = trans-urocanate + NH4(+). Its pathway is amino-acid degradation; L-histidine degradation into L-glutamate; N-formimidoyl-L-glutamate from L-histidine: step 1/3. The protein is Histidine ammonia-lyase of Koribacter versatilis (strain Ellin345).